A 381-amino-acid polypeptide reads, in one-letter code: tRNA (guanine(6)-N2)-methyltransferase (381 aa).

The region spanning 43–157 is the THUMP domain; sequence KLIPKINYLS…FDELIVGIDT (115 aa). S-adenosyl-L-methionine contacts are provided by residues 173–177, 204–206, Asp-261, 289–290, and Asn-306; these read HPAHL, SGT, and DA.

This sequence belongs to the methyltransferase superfamily.

The protein localises to the cytoplasm. It carries out the reaction guanosine(6) in tRNA + S-adenosyl-L-methionine = N(2)-methylguanosine(6) in tRNA + S-adenosyl-L-homocysteine + H(+). S-adenosyl-L-methionine-dependent methyltransferase that catalyzes the methylation of the guanosine nucleotide at position 6 (m2G6) in tRNA(Cys). The polypeptide is tRNA (guanine(6)-N2)-methyltransferase (Methanocaldococcus jannaschii (strain ATCC 43067 / DSM 2661 / JAL-1 / JCM 10045 / NBRC 100440) (Methanococcus jannaschii)).